Reading from the N-terminus, the 93-residue chain is Pyrimidine/purine nucleoside phosphorylase (93 aa).

It belongs to the nucleoside phosphorylase PpnP family.

The catalysed reaction is a purine D-ribonucleoside + phosphate = a purine nucleobase + alpha-D-ribose 1-phosphate. It carries out the reaction adenosine + phosphate = alpha-D-ribose 1-phosphate + adenine. The enzyme catalyses cytidine + phosphate = cytosine + alpha-D-ribose 1-phosphate. It catalyses the reaction guanosine + phosphate = alpha-D-ribose 1-phosphate + guanine. The catalysed reaction is inosine + phosphate = alpha-D-ribose 1-phosphate + hypoxanthine. It carries out the reaction thymidine + phosphate = 2-deoxy-alpha-D-ribose 1-phosphate + thymine. The enzyme catalyses uridine + phosphate = alpha-D-ribose 1-phosphate + uracil. It catalyses the reaction xanthosine + phosphate = alpha-D-ribose 1-phosphate + xanthine. Its function is as follows. Catalyzes the phosphorolysis of diverse nucleosides, yielding D-ribose 1-phosphate and the respective free bases. Can use uridine, adenosine, guanosine, cytidine, thymidine, inosine and xanthosine as substrates. Also catalyzes the reverse reactions. The sequence is that of Pyrimidine/purine nucleoside phosphorylase from Pseudomonas savastanoi pv. phaseolicola (strain 1448A / Race 6) (Pseudomonas syringae pv. phaseolicola (strain 1448A / Race 6)).